Consider the following 65-residue polypeptide: Small ribosomal subunit protein bS21 (65 aa).

It belongs to the bacterial ribosomal protein bS21 family.

This is Small ribosomal subunit protein bS21 from Acidobacterium capsulatum (strain ATCC 51196 / DSM 11244 / BCRC 80197 / JCM 7670 / NBRC 15755 / NCIMB 13165 / 161).